The primary structure comprises 61 residues: Tubulin alpha-4 chain (61 aa).

Glutamine 11 lines the GTP pocket. Residues 35 to 61 are disordered; it reads QMPGDKTIGGGDAEFDEGEDGDEGDEY. Lysine 40 carries the post-translational modification N6-acetyllysine. Residues 47–61 are compositionally biased toward acidic residues; that stretch reads AEFDEGEDGDEGDEY.

This sequence belongs to the tubulin family. In terms of assembly, dimer of alpha and beta chains. A typical microtubule is a hollow water-filled tube with an outer diameter of 25 nm and an inner diameter of 15 nM. Alpha-beta heterodimers associate head-to-tail to form protofilaments running lengthwise along the microtubule wall with the beta-tubulin subunit facing the microtubule plus end conferring a structural polarity. Microtubules usually have 13 protofilaments but different protofilament numbers can be found in some organisms and specialized cells. Mg(2+) is required as a cofactor. Post-translationally, undergoes a tyrosination/detyrosination cycle, the cyclic removal and re-addition of a C-terminal tyrosine residue by the enzymes tubulin tyrosine carboxypeptidase (TTCP) and tubulin tyrosine ligase (TTL), respectively. Acetylation of alpha chains at Lys-40 stabilizes microtubules and affects affinity and processivity of microtubule motors. This modification has a role in multiple cellular functions, ranging from cell motility, cell cycle progression or cell differentiation to intracellular trafficking and signaling.

Its subcellular location is the cytoplasm. The protein resides in the cytoskeleton. The catalysed reaction is GTP + H2O = GDP + phosphate + H(+). Functionally, tubulin is the major constituent of microtubules, a cylinder consisting of laterally associated linear protofilaments composed of alpha- and beta-tubulin heterodimers. Microtubules grow by the addition of GTP-tubulin dimers to the microtubule end, where a stabilizing cap forms. Below the cap, tubulin dimers are in GDP-bound state, owing to GTPase activity of alpha-tubulin. The polypeptide is Tubulin alpha-4 chain (TUBA4) (Zea mays (Maize)).